We begin with the raw amino-acid sequence, 309 residues long: Porphobilinogen deaminase (309 aa).

Cys242 is modified (S-(dipyrrolylmethanemethyl)cysteine).

It belongs to the HMBS family. In terms of assembly, monomer. It depends on dipyrromethane as a cofactor.

It carries out the reaction 4 porphobilinogen + H2O = hydroxymethylbilane + 4 NH4(+). Its pathway is porphyrin-containing compound metabolism; protoporphyrin-IX biosynthesis; coproporphyrinogen-III from 5-aminolevulinate: step 2/4. In terms of biological role, tetrapolymerization of the monopyrrole PBG into the hydroxymethylbilane pre-uroporphyrinogen in several discrete steps. In Shewanella frigidimarina (strain NCIMB 400), this protein is Porphobilinogen deaminase.